Consider the following 298-residue polypeptide: Biphenyl-2,3-diol 1,2-dioxygenase (298 aa).

2 VOC domains span residues 5-119 (SLGY…IYYG) and 143-264 (GLGH…YGWS). His-146, His-210, and Glu-260 together coordinate Fe cation.

This sequence belongs to the extradiol ring-cleavage dioxygenase family. In terms of assembly, homooctamer. The enzyme is composed of two planar tetramers rotated at 45 degrees relative to each other, with a channel in the middle. The cofactor is Fe(2+).

The catalysed reaction is biphenyl-2,3-diol + O2 = 2-hydroxy-6-oxo-6-phenylhexa-2,4-dienoate + H(+). Its pathway is xenobiotic degradation; biphenyl degradation; 2-hydroxy-2,4-pentadienoate and benzoate from biphenyl: step 3/4. Its function is as follows. Shows a preference for catechols with groups immediately adjacent to the hydroxyl substituents. In Paraburkholderia xenovorans (strain LB400), this protein is Biphenyl-2,3-diol 1,2-dioxygenase (bphC).